A 2211-amino-acid polypeptide reads, in one-letter code: Nonribosomal peptide synthetase 13 (2211 aa).

Residues Thr-76–Pro-475 form an adenylation 1 region. A Carrier 1 domain is found at Pro-594–Gln-671. Ser-631 is modified (O-(pantetheine 4'-phosphoryl)serine). The segment at Glu-710–Val-975 is condensation 1. The interval Thr-1169–Arg-1563 is adenylation 2. The 80-residue stretch at Pro-1677 to Ala-1756 folds into the Carrier 2 domain. Ser-1714 carries the post-translational modification O-(pantetheine 4'-phosphoryl)serine. The tract at residues His-1814 to Ser-2069 is condensation 2.

Belongs to the NRP synthetase family.

It catalyses the reaction L-proline + L-tryptophan + 2 ATP = brevianamide F + 2 AMP + 2 diphosphate + 2 H(+). The protein operates within mycotoxin biosynthesis. In terms of biological role, nonribosomal peptide synthetase; part of the gene cluster that mediates the biosynthesis of fumitremorgins, indole alkaloids that carry not only intriguing chemical structures, but also interesting biological and pharmacological activities. The biosynthesis of fumitremorgin-type alkaloids begins by condensation of the two amino acids L-tryptophan and L-proline to brevianamide F, catalyzed by the non-ribosomal peptide synthetase ftmA. Brevianamide F is then prenylated by the prenyltransferase ftmPT1/ftmB in the presence of dimethylallyl diphosphate, resulting in the formation of tryprostatin B. The three cytochrome P450 monooxygenases, ftmP450-1/ftmC, ftmP450-2/ftmE and ftmP450-3/FtmG, are responsible for the conversion of tryprostatin B to 6-hydroxytryprostatin B, tryprostatin A to fumitremorgin C and fumitremorgin C to 12,13-dihydroxyfumitremorgin C, respectively. The putative methyltransferase ftmMT/ftmD is expected for the conversion of 6-hydroxytryprostatin B to tryprostatin A. FtmPT2/FtmH catalyzes the prenylation of 12,13-dihydroxyfumitre-morgin C in the presence of dimethylallyl diphosphate, resulting in the formation of fumitremorgin B. Fumitremorgin B is further converted to verruculogen by ftmOx1/ftmF via the insertion of an endoperoxide bond between the two prenyl moieties. In some fungal species, verruculogen is further converted to fumitremorgin A, but the enzymes involved in this step have not been identified yet. This Aspergillus fumigatus (Neosartorya fumigata) protein is Nonribosomal peptide synthetase 13.